Consider the following 233-residue polypeptide: Maternal B9.15 protein (233 aa).

The segment at 135-165 (KATSDYHSGTSSDEEPTNKEPKTIPKVSNPN) is disordered.

Belongs to the BTG family.

This chain is Maternal B9.15 protein, found in Xenopus laevis (African clawed frog).